A 1541-amino-acid polypeptide reads, in one-letter code: MSFLEEARAAGRAVVLALVLLLLPAVPVGASVPPRPLLPLQPGMPHVCAEQELTLVGRRQPCVQALSHTVPVWKAGCGWQAWCVGHERRTVYYMGYRQVYTTEARTVLRCCRGWMQQPDEEGCLSAECSASLCFHGGRCVPGSAQPCHCPPGFQGPRCQYDVDECRTHNGGCQHRCVNTPGSYLCECKPGFRLHTDSRTCLAINSCALGNGGCQHHCVQLTITRHRCQCRPGFQLQEDGRHCVRRSPCANRNGSCMHRCQVVRGLARCECHVGYQLAADGKACEDVDECAAGLAQCAHGCLNTQGSFKCVCHAGYELGADGRQCYRIEMEIVNSCEANNGGCSHGCSHTSAGPLCTCPRGYELDTDQRTCIDVDDCADSPCCQQVCTNNPGGYECGCYAGYRLSADGCGCEDVDECASSRGGCEHHCTNLAGSFQCSCEAGYRLHEDRRGCSPLEEPMVDLDGELPFVRPLPHIAVLQDELPQLFQDDDVGADEEEAELRGEHTLTEKFVCLDDSFGHDCSLTCDDCRNGGTCLLGLDGCDCPEGWTGLICNETCPPDTFGKNCSFSCSCQNGGTCDSVTGACRCPPGVSGTNCEDGCPKGYYGKHCRKKCNCANRGRCHRLYGACLCDPGLYGRFCHLTCPPWAFGPGCSEECQCVQPHTQSCDKRDGSCSCKAGFRGERCQAECELGYFGPGCWQACTCPVGVACDSVSGECGKRCPAGFQGEDCGQECPVGTFGVNCSSSCSCGGAPCHGVTGQCRCPPGRTGEDCEADCPEGRWGLGCQEICPACQHAARCDPETGACLCLPGFVGSRCQDVCPAGWYGPSCQTRCSCANDGHCHPATGHCSCAPGWTGFSCQRACDTGHWGPDCSHPCNCSAGHGSCDAISGLCLCEAGYVGPRCEQQCPQGHFGPGCEQRCQCQHGAACDHVSGACTCPAGWRGTFCEHACPAGFFGLDCRSACNCTAGAACDAVNGSCLCPAGRRGPRCAETCPAHTYGHNCSQACACFNGASCDPVHGQCHCAPGWMGPSCLQACPAGLYGDNCRHSCLCQNGGTCDPVSGHCACPEGWAGLACEKECLPRDVRAGCRHSGGCLNGGLCDPHTGRCLCPAGWTGDKCQSPCLRGWFGEACAQRCSCPPGAACHHVTGACRCPPGFTGSGCEQACPPGSFGEDCAQMCQCPGENPACHPATGTCSCAAGYHGPSCQQRCPPGRYGPGCEQLCGCLNGGSCDAATGACRCPTGFLGTDCNLTCPQGRFGPNCTHVCGCGQGAACDPVTGTCLCPPGRAGVRCERGCPQNRFGVGCEHTCSCRNGGLCHASNGSCSCGLGWTGRHCELACPPGRYGAACHLECSCHNNSTCEPATGTCRCGPGFYGQACEHPCPPGFHGAGCQGLCWCQHGAPCDPISGRCLCPAGFHGHFCERGCEPGSFGEGCHQRCDCDGGAPCDPVTGLCLCPPGRSGATCNLDCRRGQFGPSCTLHCDCGGGADCDPVSGQCHCVDGYMGPTCREGGPLRLPENPSLAQGSAGTLPASSRPTSRSGGPARH.

Residues 1–30 (MSFLEEARAAGRAVVLALVLLLLPAVPVGA) form the signal peptide. The 82-residue stretch at 44–125 (MPHVCAEQEL…QQPDEEGCLS (82 aa)) folds into the EMI domain. 15 disulfides stabilise this stretch: C48/C111, C77/C83, C110/C123, C128/C139, C133/C147, C149/C158, C165/C176, C172/C185, C187/C200, C242/C255, C248/C268, C270/C283, C289/C300, C296/C309, and C311/C324. Positions 124–159 (LSAECSASLCFHGGRCVPGSAQPCHCPPGFQGPRCQ) constitute an EGF-like 1 domain. The EGF-like 2; calcium-binding domain maps to 161–201 (DVDECRTHNGGCQHRCVNTPGSYLCECKPGFRLHTDSRTCL). 2 EGF-like domains span residues 206–242 (CALG…GRHC) and 238–284 (DGRH…KACE). N-linked (GlcNAc...) asparagine glycosylation is present at N252. In terms of domain architecture, EGF-like 5; calcium-binding spans 285-325 (DVDECAAGLAQCAHGCLNTQGSFKCVCHAGYELGADGRQCY). 2 EGF-like domains span residues 335-370 (CEAN…QRTC) and 375-411 (DCAD…CGCE). The EGF-like 8; calcium-binding domain maps to 412–452 (DVDECASSRGGCEHHCTNLAGSFQCSCEAGYRLHEDRRGCS). 12 disulfides stabilise this stretch: C416–C427, C423–C436, C438–C451, C520–C533, C527–C540, C542–C551, C564–C576, C570–C583, C585–C594, C607–C619, C613–C626, and C628–C637. EGF-like domains follow at residues 516 to 552 (FGHD…LICN), 560 to 595 (FGKN…TNCE), 603 to 638 (YGKH…RFCH), 736 to 770 (FGVN…EDCE), 783 to 814 (QEIC…SRCQ), 822 to 857 (YGPS…FSCQ), 865 to 901 (WGPD…PRCE), 909 to 944 (FGPG…TFCE), 955 to 987 (DCRS…PRCA), 995 to 1030 (YGHN…PSCL), 1038 to 1073 (YGDN…LACE), 1081 to 1116 (VRAG…DKCQ), 1124 to 1159 (FGEA…SGCE), 1211 to 1246 (YGPG…TDCN), 1254 to 1289 (FGPN…VRCE), 1297 to 1332 (FGVG…RHCE), 1345 to 1375 (HLEC…QACE), 1383 to 1418 (HGAG…HFCE), and 1469 to 1504 (FGPS…PTCR). N739 carries an N-linked (GlcNAc...) asparagine glycan. Intrachain disulfides connect C740/C751, C744/C758, C760/C769, C786/C795, C789/C802, C804/C813, C826/C838, C832/C845, C847/C856, C869/C882, C873/C889, C891/C900, C913/C925, C919/C932, and C934/C943. Disulfide bonds link C999/C1011, C1005/C1018, C1020/C1029, C1042/C1054, C1048/C1061, C1063/C1072, C1085/C1097, C1091/C1104, C1106/C1115, C1128/C1140, C1134/C1147, C1149/C1158, C1215/C1227, C1221/C1234, C1236/C1245, C1258/C1270, C1264/C1277, C1279/C1288, C1301/C1313, C1307/C1320, C1322/C1331, C1348/C1356, C1350/C1363, C1365/C1374, C1387/C1399, C1393/C1406, C1408/C1417, C1473/C1485, C1479/C1492, and C1494/C1503. Residues 1509 to 1541 (LRLPENPSLAQGSAGTLPASSRPTSRSGGPARH) form a disordered region. Positions 1516–1535 (SLAQGSAGTLPASSRPTSRS) are enriched in polar residues.

It is found in the secreted. This is Multiple epidermal growth factor-like domains protein 6 (MEGF6) from Homo sapiens (Human).